The sequence spans 242 residues: AA9 family lytic polysaccharide monooxygenase F (242 aa).

The first 20 residues, 1 to 20 (MVQFKLSTASLLALASYAAA), serve as a signal peptide directing secretion. Position 21 (histidine 21) interacts with Cu(2+). The segment at 31-53 (GQTYPGADPHNPNPESPGWQAEN) is disordered. Intrachain disulfides connect cysteine 71–cysteine 192 and cysteine 112–cysteine 116. Position 101 (histidine 101) interacts with Cu(2+). 2 residues coordinate O2: histidine 178 and glutamine 187. Tyrosine 189 contributes to the Cu(2+) binding site.

It belongs to the polysaccharide monooxygenase AA9 family. Cu(2+) serves as cofactor.

The protein localises to the secreted. It carries out the reaction [(1-&gt;4)-beta-D-glucosyl]n+m + reduced acceptor + O2 = 4-dehydro-beta-D-glucosyl-[(1-&gt;4)-beta-D-glucosyl]n-1 + [(1-&gt;4)-beta-D-glucosyl]m + acceptor + H2O.. Lytic polysaccharide monooxygenase (LPMO) that depolymerizes crystalline and amorphous polysaccharides via the oxidation of scissile alpha- or beta-(1-4)-glycosidic bonds, yielding C1 or C4 oxidation products. Catalysis by LPMOs requires the reduction of the active-site copper from Cu(II) to Cu(I) by a reducing agent and H(2)O(2) or O(2) as a cosubstrate. Active on hemicelluloses, including xylan, glucomannan, and xyloglucan. Shows clear activity on cellooligosaccharides, generating C4 oxidation products. Has no activity on ivory nut mannan (INM), a linear beta-1,4-linked mannan without substitutions. In Malbranchea cinnamomea (Thermophilic fungus), this protein is AA9 family lytic polysaccharide monooxygenase F.